The chain runs to 656 residues: Kinesin-related protein SMY1 (656 aa).

The 338-residue stretch at His27 to Ile364 folds into the Kinesin motor domain. Residue Gly114 to Ser121 participates in ATP binding. Residue Thr583 is modified to Phosphothreonine.

Belongs to the TRAFAC class myosin-kinesin ATPase superfamily. Kinesin family.

It localises to the cytoplasm. It is found in the cytoskeleton. Functionally, possible microtubule-based motor that can interact or substitute with myosin 2 (MYO2). The chain is Kinesin-related protein SMY1 (SMY1) from Saccharomyces cerevisiae (strain ATCC 204508 / S288c) (Baker's yeast).